Here is a 219-residue protein sequence, read N- to C-terminus: NADH-ubiquinone oxidoreductase 23 kDa subunit, mitochondrial (219 aa).

4Fe-4S ferredoxin-type domains follow at residues 111–140 (RRYP…IEAE) and 150–179 (TRYD…ESPN). Positions 120, 123, 126, 130, 159, 162, 165, and 169 each coordinate [4Fe-4S] cluster.

It belongs to the complex I 23 kDa subunit family. In terms of assembly, complex I is composed of about 40 different subunits. [4Fe-4S] cluster is required as a cofactor.

The protein resides in the mitochondrion. The catalysed reaction is a ubiquinone + NADH + 5 H(+)(in) = a ubiquinol + NAD(+) + 4 H(+)(out). Its function is as follows. Core subunit of the mitochondrial membrane respiratory chain NADH dehydrogenase (Complex I) that is believed to belong to the minimal assembly required for catalysis. Complex I functions in the transfer of electrons from NADH to the respiratory chain. The immediate electron acceptor for the enzyme is believed to be ubiquinone. May donate electrons to ubiquinone. This is NADH-ubiquinone oxidoreductase 23 kDa subunit, mitochondrial (nuo21.3c) from Neurospora crassa (strain ATCC 24698 / 74-OR23-1A / CBS 708.71 / DSM 1257 / FGSC 987).